The following is a 502-amino-acid chain: Lysine--tRNA ligase (502 aa).

The Mg(2+) site is built by Glu412 and Glu419.

It belongs to the class-II aminoacyl-tRNA synthetase family. As to quaternary structure, homodimer. Mg(2+) serves as cofactor.

It localises to the cytoplasm. The catalysed reaction is tRNA(Lys) + L-lysine + ATP = L-lysyl-tRNA(Lys) + AMP + diphosphate. The polypeptide is Lysine--tRNA ligase (Nitrosomonas europaea (strain ATCC 19718 / CIP 103999 / KCTC 2705 / NBRC 14298)).